Here is a 288-residue protein sequence, read N- to C-terminus: Probable endonuclease 4 (288 aa).

The Zn(2+) site is built by His75, His115, Glu153, Asp187, His190, His224, Asp237, His239, and Glu269.

The protein belongs to the AP endonuclease 2 family. It depends on Zn(2+) as a cofactor.

The catalysed reaction is Endonucleolytic cleavage to 5'-phosphooligonucleotide end-products.. Its function is as follows. Endonuclease IV plays a role in DNA repair. It cleaves phosphodiester bonds at apurinic or apyrimidinic (AP) sites, generating a 3'-hydroxyl group and a 5'-terminal sugar phosphate. This is Probable endonuclease 4 from Chlamydia muridarum (strain MoPn / Nigg).